The chain runs to 956 residues: Glutamate receptor ionotropic, kainate 4 (956 aa).

A signal peptide spans 1 to 20 (MPRVSAPLVLLPAWLVMVAC). Over 21–545 (SPHSLRIAAI…YFSFLDPFSP (525 aa)) the chain is Extracellular. Asn-158, Asn-220, Asn-272, Asn-286, Asn-323, Asn-408, Asn-415, and Asn-479 each carry an N-linked (GlcNAc...) asparagine glycan. Residues Gly-500, Thr-502, and Arg-507 each coordinate L-glutamate. The chain crosses the membrane as a helical span at residues 546 to 566 (GVWLFMLLAYLAVSCVLFLVA). Residues 567–623 (RLTPYEWYSPHPCAQGRCNLLVNQYSLGNSLWFPVGGFMQQGSTIAPRALSTRCVSG) lie on the Cytoplasmic side of the membrane. A helical membrane pass occupies residues 624–644 (VWWAFTLIIISSYTANLAAFL). Topologically, residues 645-804 (TVQRMDVPIE…HRAKGLGMEN (160 aa)) are extracellular. Residues Ser-674, Ser-675, and Glu-723 each contribute to the L-glutamate site. N-linked (GlcNAc...) asparagine glycosylation occurs at Asn-736. The helical transmembrane segment at 805 to 825 (IGGIFVVLICGLIVAIFMAML) threads the bilayer. Over 826–956 (EFLWTLRHSE…EKTTNSSEPE (131 aa)) the chain is Cytoplasmic. 2 disordered regions span residues 863-889 (RRRAAVPPPRPPIPEERRPRGTATLSN) and 931-956 (LRARPSPARSEESLEWEKTTNSSEPE). Positions 939-948 (RSEESLEWEK) are enriched in basic and acidic residues.

Belongs to the glutamate-gated ion channel (TC 1.A.10.1) family. GRIK4 subfamily. In terms of assembly, homodimer. Can form functional heteromeric receptors with GRIK1, GRIK2 and GRIK3.

Its subcellular location is the cell membrane. The protein localises to the postsynaptic cell membrane. The protein resides in the presynaptic cell membrane. In terms of biological role, ionotropic glutamate receptor that functions as a cation-permeable ligand-gated ion channel. Cannot form functional channels on its own. Shows channel activity only in heteromeric assembly with GRIK1, GRIK2 and GRIK3 subunits. In Homo sapiens (Human), this protein is Glutamate receptor ionotropic, kainate 4 (GRIK4).